We begin with the raw amino-acid sequence, 197 residues long: Small ribosomal subunit protein uS4c (197 aa).

The S4 RNA-binding domain maps to 82–143 (MRLDNILFRL…KQRSKALIQN (62 aa)).

This sequence belongs to the universal ribosomal protein uS4 family. In terms of assembly, part of the 30S ribosomal subunit. Contacts protein S5. The interaction surface between S4 and S5 is involved in control of translational fidelity.

It localises to the plastid. The protein resides in the chloroplast. One of the primary rRNA binding proteins, it binds directly to 16S rRNA where it nucleates assembly of the body of the 30S subunit. Its function is as follows. With S5 and S12 plays an important role in translational accuracy. This is Small ribosomal subunit protein uS4c (rps4) from Gladiolus papilio (Goldblotch gladiolus).